We begin with the raw amino-acid sequence, 897 residues long: Protein translocase subunit SecA (897 aa).

Residues Gln-87, 105-109, and Asp-512 contribute to the ATP site; that span reads GEGKT. The tract at residues 846–897 is disordered; that stretch reads EEEQQKQARKKMVFNLVDEDETSEPSKSKKLAGRNEPCPCGSGKKYKKCCGK. 4 residues coordinate Zn(2+): Cys-883, Cys-885, Cys-894, and Cys-895.

It belongs to the SecA family. Monomer and homodimer. Part of the essential Sec protein translocation apparatus which comprises SecA, SecYEG and auxiliary proteins SecDF-YajC and YidC. Zn(2+) serves as cofactor.

Its subcellular location is the cell inner membrane. The protein resides in the cytoplasm. The enzyme catalyses ATP + H2O + cellular proteinSide 1 = ADP + phosphate + cellular proteinSide 2.. Functionally, part of the Sec protein translocase complex. Interacts with the SecYEG preprotein conducting channel. Has a central role in coupling the hydrolysis of ATP to the transfer of proteins into and across the cell membrane, serving as an ATP-driven molecular motor driving the stepwise translocation of polypeptide chains across the membrane. This chain is Protein translocase subunit SecA, found in Geobacter sulfurreducens (strain ATCC 51573 / DSM 12127 / PCA).